The following is a 259-amino-acid chain: 3-methyl-2-oxobutanoate hydroxymethyltransferase (259 aa).

2 residues coordinate Mg(2+): D44 and D83. Residues 44 to 45, D83, and K112 contribute to the 3-methyl-2-oxobutanoate site; that span reads DS. E114 contacts Mg(2+). The Proton acceptor role is filled by E177.

Belongs to the PanB family. As to quaternary structure, homodecamer; pentamer of dimers. Mg(2+) is required as a cofactor.

Its subcellular location is the cytoplasm. It catalyses the reaction 3-methyl-2-oxobutanoate + (6R)-5,10-methylene-5,6,7,8-tetrahydrofolate + H2O = 2-dehydropantoate + (6S)-5,6,7,8-tetrahydrofolate. Its pathway is cofactor biosynthesis; (R)-pantothenate biosynthesis; (R)-pantoate from 3-methyl-2-oxobutanoate: step 1/2. In terms of biological role, catalyzes the reversible reaction in which hydroxymethyl group from 5,10-methylenetetrahydrofolate is transferred onto alpha-ketoisovalerate to form ketopantoate. The protein is 3-methyl-2-oxobutanoate hydroxymethyltransferase of Nitratiruptor sp. (strain SB155-2).